The primary structure comprises 143 residues: Endoribonuclease YbeY (143 aa).

3 residues coordinate Zn(2+): H109, H113, and H119.

It belongs to the endoribonuclease YbeY family. It depends on Zn(2+) as a cofactor.

The protein resides in the cytoplasm. In terms of biological role, single strand-specific metallo-endoribonuclease involved in late-stage 70S ribosome quality control and in maturation of the 3' terminus of the 16S rRNA. The chain is Endoribonuclease YbeY from Carboxydothermus hydrogenoformans (strain ATCC BAA-161 / DSM 6008 / Z-2901).